We begin with the raw amino-acid sequence, 261 residues long: Cytochrome c oxidase subunit 3 (261 aa).

Topologically, residues 1 to 15 (MTHQLHAYHMVKPSP) are mitochondrial matrix. The helical transmembrane segment at 16–34 (WPLTGALSAFLLTSGLIMW) threads the bilayer. Over 35-40 (FHFYST) the chain is Mitochondrial intermembrane. A helical membrane pass occupies residues 41–66 (ALLTLGLLTNVLTMYQWWRDIIREST). The Mitochondrial matrix segment spans residues 67–72 (YQGHHT). A helical transmembrane segment spans residues 73-105 (TPVQKSLRYGMTLFIISEVFFFAGFFWAFYHSS). Topologically, residues 106 to 128 (LAPTPRLGCHWPPTGITPLNPLE) are mitochondrial intermembrane. Residues 129–152 (VPLLNTSVLLASGVTITWAHHSLM) traverse the membrane as a helical segment. The Mitochondrial matrix segment spans residues 153–155 (NGN). Residues 156-183 (RKQTIQALLITILLGTYFTLVQISEYFE) form a helical membrane-spanning segment. At 184–190 (APFTISD) the chain is on the mitochondrial intermembrane side. A helical membrane pass occupies residues 191-223 (GIYGSTFFVATGFHGLHVIIGSTFLLICLIRQL). At 224–232 (FYHFTPSHH) the chain is on the mitochondrial matrix side. The chain crosses the membrane as a helical span at residues 233–256 (FGFEAAAWYWHFVDVIWLFLYISI). Residues 257-261 (YWWGS) lie on the Mitochondrial intermembrane side of the membrane.

The protein belongs to the cytochrome c oxidase subunit 3 family. As to quaternary structure, component of the cytochrome c oxidase (complex IV, CIV), a multisubunit enzyme composed of 14 subunits. The complex is composed of a catalytic core of 3 subunits MT-CO1, MT-CO2 and MT-CO3, encoded in the mitochondrial DNA, and 11 supernumerary subunits COX4I, COX5A, COX5B, COX6A, COX6B, COX6C, COX7A, COX7B, COX7C, COX8 and NDUFA4, which are encoded in the nuclear genome. The complex exists as a monomer or a dimer and forms supercomplexes (SCs) in the inner mitochondrial membrane with NADH-ubiquinone oxidoreductase (complex I, CI) and ubiquinol-cytochrome c oxidoreductase (cytochrome b-c1 complex, complex III, CIII), resulting in different assemblies (supercomplex SCI(1)III(2)IV(1) and megacomplex MCI(2)III(2)IV(2)).

It localises to the mitochondrion inner membrane. It catalyses the reaction 4 Fe(II)-[cytochrome c] + O2 + 8 H(+)(in) = 4 Fe(III)-[cytochrome c] + 2 H2O + 4 H(+)(out). Component of the cytochrome c oxidase, the last enzyme in the mitochondrial electron transport chain which drives oxidative phosphorylation. The respiratory chain contains 3 multisubunit complexes succinate dehydrogenase (complex II, CII), ubiquinol-cytochrome c oxidoreductase (cytochrome b-c1 complex, complex III, CIII) and cytochrome c oxidase (complex IV, CIV), that cooperate to transfer electrons derived from NADH and succinate to molecular oxygen, creating an electrochemical gradient over the inner membrane that drives transmembrane transport and the ATP synthase. Cytochrome c oxidase is the component of the respiratory chain that catalyzes the reduction of oxygen to water. Electrons originating from reduced cytochrome c in the intermembrane space (IMS) are transferred via the dinuclear copper A center (CU(A)) of subunit 2 and heme A of subunit 1 to the active site in subunit 1, a binuclear center (BNC) formed by heme A3 and copper B (CU(B)). The BNC reduces molecular oxygen to 2 water molecules using 4 electrons from cytochrome c in the IMS and 4 protons from the mitochondrial matrix. The sequence is that of Cytochrome c oxidase subunit 3 (MT-CO3) from Papio hamadryas (Hamadryas baboon).